The sequence spans 181 residues: Large ribosomal subunit protein uL5c (181 aa).

Belongs to the universal ribosomal protein uL5 family. As to quaternary structure, part of the 50S ribosomal subunit; contacts the 5S rRNA.

It localises to the plastid. The protein resides in the chloroplast. Its function is as follows. Binds 5S rRNA, forms part of the central protuberance of the 50S subunit. In Heterosigma akashiwo (strain NIES-293 / 8280G21-1), this protein is Large ribosomal subunit protein uL5c (rpl5).